Reading from the N-terminus, the 463-residue chain is Argininosuccinate lyase (463 aa).

Belongs to the lyase 1 family. Argininosuccinate lyase subfamily.

It localises to the cytoplasm. It carries out the reaction 2-(N(omega)-L-arginino)succinate = fumarate + L-arginine. The protein operates within amino-acid biosynthesis; L-arginine biosynthesis; L-arginine from L-ornithine and carbamoyl phosphate: step 3/3. The polypeptide is Argininosuccinate lyase (Streptococcus pneumoniae (strain 70585)).